A 490-amino-acid polypeptide reads, in one-letter code: Cytochrome P450 71A22 (490 aa).

The chain crosses the membrane as a helical span at residues glutamate 2–isoleucine 22. Cysteine 432 is a binding site for heme.

Belongs to the cytochrome P450 family. Heme serves as cofactor.

The protein localises to the membrane. The protein is Cytochrome P450 71A22 (CYP71A22) of Arabidopsis thaliana (Mouse-ear cress).